The sequence spans 240 residues: Biosynthetic peptidoglycan transglycosylase (240 aa).

Residues Phe-9–Pro-31 form a helical membrane-spanning segment.

Belongs to the glycosyltransferase 51 family.

It is found in the cell inner membrane. It catalyses the reaction [GlcNAc-(1-&gt;4)-Mur2Ac(oyl-L-Ala-gamma-D-Glu-L-Lys-D-Ala-D-Ala)](n)-di-trans,octa-cis-undecaprenyl diphosphate + beta-D-GlcNAc-(1-&gt;4)-Mur2Ac(oyl-L-Ala-gamma-D-Glu-L-Lys-D-Ala-D-Ala)-di-trans,octa-cis-undecaprenyl diphosphate = [GlcNAc-(1-&gt;4)-Mur2Ac(oyl-L-Ala-gamma-D-Glu-L-Lys-D-Ala-D-Ala)](n+1)-di-trans,octa-cis-undecaprenyl diphosphate + di-trans,octa-cis-undecaprenyl diphosphate + H(+). It functions in the pathway cell wall biogenesis; peptidoglycan biosynthesis. In terms of biological role, peptidoglycan polymerase that catalyzes glycan chain elongation from lipid-linked precursors. This Pseudomonas fluorescens (strain SBW25) protein is Biosynthetic peptidoglycan transglycosylase.